A 517-amino-acid polypeptide reads, in one-letter code: G-protein coupled receptor Mth (517 aa).

The first 27 residues, 1–27 (MKLFWVKRLLRISTVVVTLLLLQRTNA), serve as a signal peptide directing secretion. Residues 28 to 221 (AIPDCDYYDT…CLISPSRMGQ (194 aa)) lie on the Extracellular side of the membrane. 5 disulfides stabilise this stretch: Cys-32-Cys-86, Cys-88-Cys-93, Cys-97-Cys-191, Cys-98-Cys-109, and Cys-153-Cys-212. Asn-48 and Asn-61 each carry an N-linked (GlcNAc...) asparagine glycan. N-linked (GlcNAc...) asparagine glycans are attached at residues Asn-126, Asn-173, and Asn-201. The helical transmembrane segment at 222 to 242 (TVVMITSLVCMVLTITVYLFV) threads the bilayer. Topologically, residues 243-251 (KKLQNLHGK) are cytoplasmic. The helical transmembrane segment at 252-272 (CFMCYMVCLFMAYLLLLLNLW) threads the bilayer. The Extracellular segment spans residues 273-279 (QMSQNFC). Residues 280-300 (ITAGFLGYFFVMAAFLWLSVI) traverse the membrane as a helical segment. The Cytoplasmic portion of the chain corresponds to 301-323 (SLHLWNTFSGSAHNANRFLSEHR). A helical transmembrane segment spans residues 324–344 (FLAYNTYAWGMAVVLTGITYL). The Extracellular portion of the chain corresponds to 345-373 (ADKVVENEDWNPRMGFGGHCWICTQSWSA). Residues 374–394 (MLYFYGPMVFLIAFNITMFIL) form a helical membrane-spanning segment. Topologically, residues 395–427 (TANRIIGVKKDIQKFAHRQERKQKLNSDKQTYT) are cytoplasmic. Residues 428 to 448 (FFLRLFIIMGLTWSLEIGSYI) form a helical membrane-spanning segment. The Extracellular portion of the chain corresponds to 449–457 (SQFNQTWSN). Asn-452 is a glycosylation site (N-linked (GlcNAc...) asparagine). Residues 458–478 (VFLVADYLNWSQGIIIFILFV) traverse the membrane as a helical segment. Topologically, residues 479-517 (LKRSTLRLLMESIRGEGEEVNDSEEEISLENTKYDRNVL) are cytoplasmic.

It belongs to the G-protein coupled receptor 2 family. Mth subfamily. As to quaternary structure, homodimer.

The protein localises to the cell membrane. Its function is as follows. Involved in biological aging and stress response. Essential for adult survival. The protein is G-protein coupled receptor Mth (mth) of Drosophila yakuba (Fruit fly).